We begin with the raw amino-acid sequence, 857 residues long: ATP-dependent RNA helicase DDX24 (857 aa).

A disordered region spans residues 61-179 (NPSRLFSSEE…SPKLPKKSKK (119 aa)). A phosphoserine mark is found at serine 80 and serine 92. Over residues 152 to 161 (PRKKKNKGKK) the composition is skewed to basic residues. Serine 170 carries the phosphoserine modification. The Q motif signature appears at 193–221 (SAWRDLFVPKAVLRALSFLGFSAPTPIQA). The 304-residue stretch at 225-528 (APAIRDKLDI…RILHKKHVKK (304 aa)) folds into the Helicase ATP-binding domain. 238–245 (AETGSGKT) is an ATP binding site. Residues 279-363 (RFGATAHLGS…NEDGEEKFDA (85 aa)) form a disordered region. Phosphoserine occurs at positions 288 and 296. Residues 290–307 (CKDRTESGVLPEEARIET) show a composition bias toward basic and acidic residues. Polar residues predominate over residues 309–330 (AQPSDSGVQATPETSASASAQT). Basic and acidic residues predominate over residues 345–363 (LEEKPVPKQNEDGEEKFDA). Lysine 370 is covalently cross-linked (Glycyl lysine isopeptide (Lys-Gly) (interchain with G-Cter in SUMO2)). Residues 471–474 (DEAD) carry the DEAD box motif. Residues 576 to 723 (DLYLYYFLMQ…LFPVQSKYMD (148 aa)) form the Helicase C-terminal domain. Residue lysine 624 forms a Glycyl lysine isopeptide (Lys-Gly) (interchain with G-Cter in SUMO2) linkage. The tract at residues 808 to 857 (RYPTQSGRPPQPVLASRNIESALSCLSRQKRRRKKPKEPRAPPQPGSSTS) is disordered. Over residues 825–834 (NIESALSCLS) the composition is skewed to polar residues. Positions 835-844 (RQKRRRKKPK) are enriched in basic residues. Residues 848–857 (APPQPGSSTS) are compositionally biased toward pro residues.

The protein belongs to the DEAD box helicase family. DDX24/MAK5 subfamily. In terms of assembly, interacts with FADD. Interacts with RIPK1; this interaction disrupts RLR signaling activation of IFN-dependent transcription factor IRF7. Interacts with NIP7. Interacts with EP300; this interaction prevents TP53 acetylation mediated by EP300. In terms of processing, ubiquitinated by MDM2 without targeting DDX24 for proteasomal degradation. Instead, polyubiquitylated DDX24 promotes interaction with NIP7, a component of pre-rRNP processing complex, and associates with pre-rRNA molecules and pre-ribosomal particles.

The protein localises to the cytoplasm. The protein resides in the nucleus. It carries out the reaction ATP + H2O = ADP + phosphate + H(+). Its function is as follows. ATP-dependent RNA helicase that plays a role in various aspects of RNA metabolism including pre-mRNA splicing and is thereby involved in different biological processes such as cell cycle regulation or innate immunity. Plays an inhibitory role in TP53 transcriptional activity and subsequently in TP53 controlled cell growth arrest and senescence by inhibiting its EP300 mediated acetylation. Negatively regulates cytosolic RNA-mediated innate immune signaling at least in part by affecting RIPK1/IRF7 interactions. Alternatively, possesses antiviral activity by recognizing gammaherpesvirus transcripts in the context of lytic reactivation. Plays an essential role in cell cycle regulation in vascular smooth muscle cells by interacting with and regulating FANCA (Fanconi anemia complementation group A) mRNA. The chain is ATP-dependent RNA helicase DDX24 (Ddx24) from Mus musculus (Mouse).